The chain runs to 1720 residues: DNA-directed RNA polymerase I subunit RPA1 (1720 aa).

The Zn(2+) site is built by Cys64, Cys67, Cys74, His77, Cys104, and Cys107. Positions 110-201 (LTCPRAVIHL…IALFWKAHMN (92 aa)) are clamp. Zn(2+)-binding residues include Cys205 and Cys208. Ser240 is modified (phosphoserine). The tract at residues 320 to 426 (FTNGQTVNLQ…IRQILEKKEG (107 aa)) is clamp. Positions 403–416 (DSEMDKLMMDKYPG) are rudder. Residues Lys424, Arg429, and Arg436 each coordinate DNA. Residues 468–542 (YPQPVTPWNV…QGTKIVCRHV (75 aa)) are involved in RRN3 binding to Pol I complex. Arg552 provides a ligand contact to RNA. Residues Asp588, Asp590, and Asp592 each contribute to the Mg(2+) site. Asp592 contributes to the RNA binding site. Residues 805–883 (KPKADVKRQR…NEINKACMPF (79 aa)) form a funnel region. The tract at residues 960–1001 (KPPEFFFHCMAGREGLVDTAVKTSRSGYLQRCIIKHLEGLVV) is bridging helix. A mediates the interaction with TOP2A region spans residues 1060-1155 (ADPKKALHHF…SLSVWRPDIY (96 aa)). The segment at 1207-1248 (PGEAVGLLAAQSIGEPSTQMTLNTFHFAGRGEMNVTLGIPRL) is trigger loop. DNA is bound at residue Arg1249. A disordered region spans residues 1365–1498 (RNVNTRRATQ…SQEPQGPEAM (134 aa)). Residues 1373–1390 (TQRDLDNAGELGRSRGEQ) are compositionally biased toward basic and acidic residues. At Ser1386 the chain carries Phosphoserine. Composition is skewed to acidic residues over residues 1391–1412 (EGDEEEEGHIVDAEAEEGDADA) and 1422–1446 (EEEVDYESEEEEEREGEENDDEDMQ). A compositionally biased stretch (basic and acidic residues) spans 1447–1461 (EERNPHREGARKTQE). The span at 1462 to 1474 (QDEEVGLGTEEDP) shows a compositional bias: acidic residues.

It belongs to the RNA polymerase beta' chain family. In terms of assembly, component of the RNA polymerase I (Pol I) complex consisting of 13 subunits: a ten-subunit catalytic core composed of POLR1A/RPA1, POLR1B/RPA2, POLR1C/RPAC1, POLR1D/RPAC2, POLR1H/RPA12, POLR2E/RPABC1, POLR2F/RPABC2, POLR2H/RPABC3, POLR2K/RPABC4 and POLR2L/RPABC5; a mobile stalk subunit POLR1F/RPA43 protruding from the core and additional subunits homologous to general transcription factors POLR1E/RPA49 and POLR1G/RPA34. Part of Pol I pre-initiation complex (PIC), in which Pol I core assembles with RRN3 and promoter-bound UTBF and SL1/TIF-IB complex. Interacts (via dock II domain) with TOP2A; this interaction may assist Pol I transcription initiation by releasing supercoils occurring during DNA unwinding. Interacts with CAVIN1; this interaction induces the dissociation of Pol I complex paused at rDNA terminator sequences. Interacts with MYO1C. Interacts with ERBB2. Interacts with DDX11. Interacts with RECQL5. Requires Mg(2+) as cofactor.

It localises to the nucleus. The protein localises to the nucleolus. The protein resides in the chromosome. It catalyses the reaction RNA(n) + a ribonucleoside 5'-triphosphate = RNA(n+1) + diphosphate. Its function is as follows. Catalytic core component of RNA polymerase I (Pol I), a DNA-dependent RNA polymerase which synthesizes ribosomal RNA precursors using the four ribonucleoside triphosphates as substrates. Transcribes 47S pre-rRNAs from multicopy rRNA gene clusters, giving rise to 5.8S, 18S and 28S ribosomal RNAs. Pol I-mediated transcription cycle proceeds through transcription initiation, transcription elongation and transcription termination stages. During transcription initiation, Pol I pre-initiation complex (PIC) is recruited by the selectivity factor 1 (SL1/TIF-IB) complex bound to the core promoter that precedes an rDNA repeat unit. The PIC assembly bends the promoter favoring the formation of the transcription bubble and promoter escape. Once the polymerase has escaped from the promoter it enters the elongation phase during which RNA is actively polymerized, based on complementarity with the template DNA strand. Highly processive, assembles in structures referred to as 'Miller trees' where many elongating Pol I complexes queue and transcribe the same rDNA coding regions. At terminator sequences downstream of the rDNA gene, PTRF interacts with Pol I and halts Pol I transcription leading to the release of the RNA transcript and polymerase from the DNA. Forms Pol I active center together with the second largest subunit POLR1B/RPA2. Appends one nucleotide at a time to the 3' end of the nascent RNA, with POLR1A/RPA1 contributing a Mg(2+)-coordinating DxDGD motif, and POLR1B/RPA2 participating in the coordination of a second Mg(2+) ion and providing lysine residues believed to facilitate Watson-Crick base pairing between the incoming nucleotide and the template base. Typically, Mg(2+) ions direct a 5' nucleoside triphosphate to form a phosphodiester bond with the 3' hydroxyl of the preceding nucleotide of the nascent RNA, with the elimination of pyrophosphate. Has proofreading activity: Pauses and backtracks to allow the cleavage of a missincorporated nucleotide via POLR1H/RPA12. High Pol I processivity is associated with decreased transcription fidelity. In Homo sapiens (Human), this protein is DNA-directed RNA polymerase I subunit RPA1.